Here is a 180-residue protein sequence, read N- to C-terminus: NAD(P)H-quinone oxidoreductase subunit I, chloroplastic (180 aa).

2 4Fe-4S ferredoxin-type domains span residues 55-84 and 95-124; these read GRIH…VDWR and LNYS…MTEE. [4Fe-4S] cluster is bound by residues cysteine 64, cysteine 67, cysteine 70, cysteine 74, cysteine 104, cysteine 107, cysteine 110, and cysteine 114.

Belongs to the complex I 23 kDa subunit family. As to quaternary structure, NDH is composed of at least 16 different subunits, 5 of which are encoded in the nucleus. [4Fe-4S] cluster serves as cofactor.

Its subcellular location is the plastid. It is found in the chloroplast thylakoid membrane. It carries out the reaction a plastoquinone + NADH + (n+1) H(+)(in) = a plastoquinol + NAD(+) + n H(+)(out). It catalyses the reaction a plastoquinone + NADPH + (n+1) H(+)(in) = a plastoquinol + NADP(+) + n H(+)(out). Its function is as follows. NDH shuttles electrons from NAD(P)H:plastoquinone, via FMN and iron-sulfur (Fe-S) centers, to quinones in the photosynthetic chain and possibly in a chloroplast respiratory chain. The immediate electron acceptor for the enzyme in this species is believed to be plastoquinone. Couples the redox reaction to proton translocation, and thus conserves the redox energy in a proton gradient. The protein is NAD(P)H-quinone oxidoreductase subunit I, chloroplastic of Illicium oligandrum (Star anise).